The primary structure comprises 152 residues: UPF0719 transmembrane protein MT2674.1 (152 aa).

Transmembrane regions (helical) follow at residues 21-41 (VATV…FLMV), 62-82 (VVLA…AIYA), 92-112 (IGVA…LVIL), and 131-151 (PAVF…AAAL).

Belongs to the UPF0719 family.

The protein resides in the cell membrane. This is UPF0719 transmembrane protein MT2674.1 from Mycobacterium tuberculosis (strain CDC 1551 / Oshkosh).